Here is a 98-residue protein sequence, read N- to C-terminus: DNA-binding protein Fis (98 aa).

Residues 74–93 (QTRAALMMGINRGTLRKKLK) constitute a DNA-binding region (H-T-H motif).

The protein belongs to the transcriptional regulatory Fis family. As to quaternary structure, homodimer.

Functionally, activates ribosomal RNA transcription. Plays a direct role in upstream activation of rRNA promoters. This is DNA-binding protein Fis from Citrobacter koseri (strain ATCC BAA-895 / CDC 4225-83 / SGSC4696).